The sequence spans 107 residues: DNA polymerase delta subunit 4 (107 aa).

A PCNA-interaction protein motif (PIP box) motif is present at residues 1-16 (MGRKRLITDSYPVVKR). The tract at residues 1-44 (MGRKRLITDSYPVVKRREGPAGHSKGELAPELGEEPQPRDEEEA) is disordered. Residues 15–28 (KRREGPAGHSKGEL) are compositionally biased toward basic and acidic residues.

It belongs to the DNA polymerase delta subunit 4 family. Component of the tetrameric DNA polymerase delta complex (Pol-delta4), which consists of POLD1/p125, POLD2/p50, POLD3/p66/p68 and POLD4/p12, with POLD1 bearing DNA polymerase and 3' to 5' proofreading exonuclease activities. Within this complex, directly interacts with POLD1 and POLD2. Directly interacts with PCNA, as do POLD1 and POLD3; this interaction stimulates Pol-delta4 polymerase activity. As POLD1 and POLD2, directly interacts with WRNIP1; this interaction stimulates DNA polymerase delta-mediated DNA synthesis, independently of the presence of PCNA. This stimulation may be due predominantly to an increase of initiation frequency and also to increased processivity. Upon genotoxic stress induced by DNA damaging agents or by replication stress, POLD4 is proteolytically degraded and Pol-delta4 is converted into a trimeric form of the complex (Pol-delta3) which has an increased proofreading activity. The DNA polymerase delta complex interacts with POLDIP2; this interaction is probably mediated through direct binding to POLD2. Post-translationally, ubiquitinated; undergoes 'Lys-48'-linked ubiquitination in response to UV irradiation, leading to proteasomal degradation. This modification is partly mediated by RNF8 and by the DCX(DTL) E3 ubiquitin ligase complex (also called CRL4(CDT2)). Efficient degradation requires the presence of PCNA and is required for the inhibition of fork progression after DNA damage.

The protein resides in the nucleus. In terms of biological role, as a component of the tetrameric DNA polymerase delta complex (Pol-delta4), plays a role in high fidelity genome replication and repair. Within this complex, increases the rate of DNA synthesis and decreases fidelity by regulating POLD1 polymerase and proofreading 3' to 5' exonuclease activity. Pol-delta4 participates in Okazaki fragment processing, through both the short flap pathway, as well as a nick translation system. Under conditions of DNA replication stress, required for the repair of broken replication forks through break-induced replication (BIR), a mechanism that may induce segmental genomic duplications of up to 200 kb. Involved in Pol-delta4 translesion synthesis (TLS) of templates carrying O6-methylguanine or abasic sites. Its degradation in response to DNA damage is required for the inhibition of fork progression and cell survival. The protein is DNA polymerase delta subunit 4 (POLD4) of Homo sapiens (Human).